The sequence spans 342 residues: Galactose mutarotase (342 aa).

Alanine 2 carries the N-acetylalanine modification. At serine 14 the chain carries Phosphoserine. Beta-D-galactose is bound by residues 81–82 (NR) and histidine 107. Position 124 is a phosphoserine (serine 124). Histidine 176 acts as the Proton donor in catalysis. Residues 176-178 (HSY), aspartate 243, glutamine 279, and glutamate 307 each bind beta-D-galactose. Glutamate 307 (proton acceptor) is an active-site residue.

Belongs to the aldose epimerase family. Monomer.

It is found in the cytoplasm. It carries out the reaction alpha-D-galactose = beta-D-galactose. It catalyses the reaction alpha-D-glucose = beta-D-glucose. It functions in the pathway carbohydrate metabolism; hexose metabolism. Its pathway is carbohydrate metabolism; galactose metabolism. Functionally, mutarotase that catalyzes the interconversion of beta-D-galactose and alpha-D-galactose during galactose metabolism. Beta-D-galactose is metabolized in the liver into glucose 1-phosphate, the primary metabolic fuel, by the action of four enzymes that constitute the Leloir pathway: GALM, GALK1 (galactokinase), GALT (galactose-1-phosphate uridylyltransferase) and GALE (UDP-galactose-4'-epimerase). Involved in the maintenance of the equilibrium between the beta- and alpha-anomers of galactose, therefore ensuring a sufficient supply of the alpha-anomer for GALK1. Also active on D-glucose although shows a preference for galactose over glucose. The polypeptide is Galactose mutarotase (GALM) (Pongo abelii (Sumatran orangutan)).